We begin with the raw amino-acid sequence, 528 residues long: MSNSQSEGQRQPAIVILDFGSQYSELIARRVRETEVYSLVMSYSTSADELRQLAPKGIILSGGPSSVYAERAPLCDPNIWDLGIPVLGVCYGMQLMVQQLGGRVEMATGKAEYGKAPLEIDDPTDLLTNVENGSTMWMSHGDSVRALPEGFVRLAHTANTPDAAVAYHTRSLYGVQFHPEVVHSTDGMSLIRNFVYHICGCEPDWTTTAFIEEAVSQVRSQVGDKRVLLALSGGVDSSTLAFLLKKAIGDQLTCMFIDQGFMRKGEPEFLMDFFDRKFNINVEYINARQRFISKLNGIVDPEEKRKIIGTEFIRVFEEESNRLGPFDYLAQGTLYPDVIESAGTNIDPKTGERVAVKIKSHHNVGGLPKDLQFKLVEPLRRLFKDEVRKVGRSLGLPEEIVRRHPFPGPGLAIRILGEVTDEKLNCLRDADLIVREEIREAGLYHEIWQAFAVLLPVRSVGVMGDQRTYAWPIVLRCVSSEDGMTADWSRLPDELLERISNRIVNEVRGVNRVVLDITSKPPGTIEWE.

Residues alanine 13–aspartate 204 form the Glutamine amidotransferase type-1 domain. The Nucleophile role is filled by cysteine 90. Catalysis depends on residues histidine 178 and glutamate 180. Residues tryptophan 205 to arginine 403 enclose the GMPS ATP-PPase domain. Serine 232–serine 238 lines the ATP pocket.

In terms of assembly, homodimer.

The enzyme catalyses XMP + L-glutamine + ATP + H2O = GMP + L-glutamate + AMP + diphosphate + 2 H(+). The protein operates within purine metabolism; GMP biosynthesis; GMP from XMP (L-Gln route): step 1/1. Its function is as follows. Catalyzes the synthesis of GMP from XMP. This Prochlorococcus marinus (strain MIT 9303) protein is GMP synthase [glutamine-hydrolyzing].